We begin with the raw amino-acid sequence, 145 residues long: Large ribosomal subunit protein uL15 (145 aa).

The tract at residues 20–54 (GRGMASGKGKTATRGHKGQNSRSGGGVRPGFEGGQ) is disordered. Gly residues predominate over residues 42–52 (SGGGVRPGFEG).

Belongs to the universal ribosomal protein uL15 family. As to quaternary structure, part of the 50S ribosomal subunit.

Its function is as follows. Binds to the 23S rRNA. The chain is Large ribosomal subunit protein uL15 from Mycoplasma mycoides subsp. mycoides SC (strain CCUG 32753 / NCTC 10114 / PG1).